Consider the following 919-residue polypeptide: MKFAYRFSNLLGTVYRRGNLNFTCDGNSVISPVGNRVTVFDLKNNKSDTLPLATRYNVKCVGLSPDGRLAIIVDEGGDALLVSLVCRSVLHHFHFKGSVHSVSFSPDGRKFVVTKGNIAQMYHAPGKKREFNAFVLDKTYFGPYDETTCIDWTDDSRCFVVGSKDMSTWVFGAERWDNLIYYALGGHKDAIVACFFESNSLDLYSLSQDGVLCMWQCDTPPEGLRLKPPAGWKADLLQREEEEEEEEDQEGDRETTIRGKATPAEEEKTGKVKYSRLAKYFFNKEGDFNNLTAAAFHKKSHLLVTGFASGIFHLHELPEFNLIHSLSISDQSIASVAINSSGDWIAFGCSGLGQLLVWEWQSESYVLKQQGHFNSMVALAYSPDGQYIVTGGDDGKVKVWNTLSGFCFVTFTEHSSGVTGVTFTATGYVVVTSSMDGTVRAFDLHRYRNFRTFTSPRPTQFSCVAVDASGEIVSAGAQDSFEIFVWSMQTGRLLDVLSGHEGPISGLCFNPMKSVLASASWDKTVRLWDMFDSWRTKETLALTSDALAVTFRPDGAELAVATLNSQITFWDPENAVQTGSIEGRHDLKTGRKELDKITAKHAAKGKAFTALCYSADGHSILAGGMSKFVCIYHVREQILMKRFEISCNLSLDAMEEFLNRRKMTEFGNLALIDQDAGQEDGVAIPLPGVRKGDMSSRHFKPEIRVTSLRFSPTGRCWAATTTEGLLIYSLDTRVLFDPFELDTSVTPGRVREALRQQDFTRAILMALRLNESKLVQEALEAVPRGEIEVVTSSLPELYVEKVLEFLASSFEVSRHLEFYLLWTHKLLMLHGQKLKSRAGTLLPVIQFLQKSIQRHLDDLSKLCSWNHYNMQYALAVSKQRGTKRSLDPLGSEEEAEASEDDSLHLLGGGGRDSEEEMLA.

5 WD repeats span residues 12–50 (GTVY…SDTL), 53–93 (ATRY…LHHF), 94–132 (HFKG…REFN), 142–181 (GPYD…NLIY), and 186–225 (GHKD…EGLR). The segment at 238 to 267 (QREEEEEEEEDQEGDRETTIRGKATPAEEE) is disordered. A compositionally biased stretch (acidic residues) spans 240–251 (EEEEEEEEDQEG). Basic and acidic residues predominate over residues 252–267 (DRETTIRGKATPAEEE). 9 WD repeats span residues 286–325 (GDFN…LIHS), 328–368 (ISDQ…YVLK), 371–410 (GHFN…CFVT), 413–452 (EHSS…NFRT), 456–498 (PRPT…DVLS), 499–538 (GHEG…RTKE), 541–580 (ALTS…QTGS), 603–642 (AKGK…LMKR), and 700–740 (KPEI…DPFE). Residues 882-919 (TKRSLDPLGSEEEAEASEDDSLHLLGGGGRDSEEEMLA) are disordered. A compositionally biased stretch (acidic residues) spans 890–900 (GSEEEAEASED). 2 positions are modified to phosphoserine: Ser-898 and Ser-902.

The protein belongs to the WD repeat PWP2 family. In terms of assembly, part of the small subunit (SSU) processome, composed of more than 70 proteins and the RNA chaperone small nucleolar RNA (snoRNA) U3.

It is found in the nucleus. The protein localises to the nucleolus. In terms of biological role, part of the small subunit (SSU) processome, first precursor of the small eukaryotic ribosomal subunit. During the assembly of the SSU processome in the nucleolus, many ribosome biogenesis factors, an RNA chaperone and ribosomal proteins associate with the nascent pre-rRNA and work in concert to generate RNA folding, modifications, rearrangements and cleavage as well as targeted degradation of pre-ribosomal RNA by the RNA exosome. The chain is Periodic tryptophan protein 2 homolog from Homo sapiens (Human).